The primary structure comprises 373 residues: Cytoplasmic tRNA 2-thiolation protein 1 (373 aa).

It belongs to the TtcA family. CTU1/NCS6/ATPBD3 subfamily.

It is found in the cytoplasm. It participates in tRNA modification; 5-methoxycarbonylmethyl-2-thiouridine-tRNA biosynthesis. Plays a central role in 2-thiolation of mcm(5)S(2)U at tRNA wobble positions of tRNA(Lys), tRNA(Glu) and tRNA(Gln). Directly binds tRNAs and probably acts by catalyzing adenylation of tRNAs, an intermediate required for 2-thiolation. It is unclear whether it acts as a sulfurtransferase that transfers sulfur from thiocarboxylated URM1 onto the uridine of tRNAs at wobble position. Prior mcm(5) tRNA modification by the elongator complex is required for 2-thiolation. May also be involved in protein urmylation. This is Cytoplasmic tRNA 2-thiolation protein 1 from Eremothecium gossypii (strain ATCC 10895 / CBS 109.51 / FGSC 9923 / NRRL Y-1056) (Yeast).